Reading from the N-terminus, the 83-residue chain is Small ribosomal subunit protein bS16 (83 aa).

The protein belongs to the bacterial ribosomal protein bS16 family.

This Shewanella frigidimarina (strain NCIMB 400) protein is Small ribosomal subunit protein bS16.